Here is a 489-residue protein sequence, read N- to C-terminus: DBIRD complex subunit ZNF326 (489 aa).

4 disordered regions span residues 1–28 (MDRE…EMGD), 62–100 (EQGH…PSFT), 133–181 (VGSR…RPGL), and 205–263 (PPFK…KNSE). Residues 7–22 (SYNQRSMDSYGNQSYS) are compositionally biased toward polar residues. The span at 62 to 76 (EQGHFGDSYDGRYEN) shows a compositional bias: basic and acidic residues. Over residues 91 to 100 (GGSSWDPSFT) the composition is skewed to polar residues. Residues 200–221 (KRKMAPPFKPVGVFGKKQKLSK) carry the Bipartite nuclear localization signal motif. 2 C2H2 AKAP95-type zinc fingers span residues 273 to 295 (CSFC…STTH) and 365 to 388 (CSAC…SADH). The interval 431 to 489 (ETQPEEQQQEQEEEEEEEEQQEQAAVPEQDLSEEQPAAIAAEPEGEDFTCDPLTTTDEV) is disordered. Residues 433–451 (QPEEQQQEQEEEEEEEEQQ) are compositionally biased toward acidic residues.

It belongs to the AKAP95 family. Component of the DBIRD complex.

Its subcellular location is the nucleus. Its function is as follows. Core component of the DBIRD complex, a multiprotein complex that acts at the interface between core mRNP particles and RNA polymerase II (RNAPII) and integrates transcript elongation with the regulation of alternative splicing. The protein is DBIRD complex subunit ZNF326 (znf326) of Xenopus tropicalis (Western clawed frog).